A 215-amino-acid polypeptide reads, in one-letter code: 3-isopropylmalate dehydratase small subunit (215 aa).

Belongs to the LeuD family. LeuD type 1 subfamily. As to quaternary structure, heterodimer of LeuC and LeuD.

It carries out the reaction (2R,3S)-3-isopropylmalate = (2S)-2-isopropylmalate. It functions in the pathway amino-acid biosynthesis; L-leucine biosynthesis; L-leucine from 3-methyl-2-oxobutanoate: step 2/4. Catalyzes the isomerization between 2-isopropylmalate and 3-isopropylmalate, via the formation of 2-isopropylmaleate. This Xylella fastidiosa (strain M12) protein is 3-isopropylmalate dehydratase small subunit.